The chain runs to 794 residues: Protein sel-1 homolog 1 (794 aa).

Positions 1–21 (MQVHVGLTLLLCAVLLSSATA) are cleaved as a signal peptide. Residues 20-91 (TASSDDESNQ…EEEVSVGEEI (72 aa)) form a disordered region. The segment at 22–737 (SSDDESNQDE…DIFTQLDMDQ (716 aa)) is interaction with ERLEC1, OS9 and SYVN1. The Lumenal segment spans residues 22–738 (SSDDESNQDE…IFTQLDMDQL (717 aa)). 2 stretches are compositionally biased toward acidic residues: residues 23–32 (SDDESNQDES) and 62–77 (DSED…EEEE). Ser-63 is modified (phosphoserine). A Fibronectin type-II domain is found at 122–170 (AHGEPCHFPFLFLDKEYDECTSDGRQDGRLWCATTYDYKTDEKWGFCET). 2 disulfide bridges follow: Cys-127/Cys-153 and Cys-141/Cys-168. Sel1-like repeat units lie at residues 183 to 218 (AEMI…GMNH), 219 to 254 (TKAL…EEGS), 255 to 290 (PKGQ…LGGN), 291 to 326 (LIAH…NHVA), 373 to 409 (VQAQ…NAGN), 410 to 446 (SHAM…DMGN), 447 to 482 (PVGQ…EQGW), 483 to 518 (VDGQ…QGGH), and 519 to 554 (ILAF…ERGR). 2 N-linked (GlcNAc...) asparagine glycosylation sites follow: Asn-195 and Asn-217. The N-linked (GlcNAc...) asparagine glycan is linked to Asn-272. The tract at residues 352–537 (NSGMLEEDLI…MHASGTGVMR (186 aa)) is important for homodimerization and oligomerization. Asn-431 carries an N-linked (GlcNAc...) asparagine glycan. N-linked (GlcNAc...) asparagine glycosylation occurs at Asn-608. 2 Sel1-like repeats span residues 627–662 (TVAR…EQQH) and 664–699 (AQAM…EASP). Residues 643–723 (TDVDYETAFI…VVYFLQYIRE (81 aa)) form an interaction with SYVN1 region. The segment at 738–794 (LLGPEWDLYLMTIIALLLGTVIAYRQRQHQDVPVPRPPGPWPAPPQQEGPPEQQPPQ) is mediates retention in the endoplasmic reticulum. The helical transmembrane segment at 739–759 (LGPEWDLYLMTIIALLLGTVI) threads the bilayer. The Cytoplasmic segment spans residues 760-794 (AYRQRQHQDVPVPRPPGPWPAPPQQEGPPEQQPPQ). The tract at residues 768–794 (DVPVPRPPGPWPAPPQQEGPPEQQPPQ) is disordered. Pro residues predominate over residues 771–794 (VPRPPGPWPAPPQQEGPPEQQPPQ).

It belongs to the sel-1 family. In terms of assembly, homodimer and homooligomer. May form a complex with ERLEC1, HSPA5, OS9, and SYVN1. Interacts with FOXRED2 and EDEM1. Interacts with LPL and LMF1; may stabilize the complex formed by LPL and LMF1 and thereby promote the export of LPL dimers. Component of the HRD1 complex, which comprises at least SYNV1/HRD1, DERL1/2, FAM8A1, HERPUD1/HERP, OS9, SEL1L and UBE2J1. SYNV1 assembles with SEL1L and FAM8A1 through its transmembrane domains, but interaction with its cytoplasmic domain is required to confer stability to FAM8A1 and enhance recruitment of HERPUD1. The interaction with SYNV1/HRD1 is direct. Post-translationally, N-glycosylated.

The protein resides in the endoplasmic reticulum membrane. In terms of biological role, plays a role in the endoplasmic reticulum quality control (ERQC) system also called ER-associated degradation (ERAD) involved in ubiquitin-dependent degradation of misfolded endoplasmic reticulum proteins. Enhances SYVN1 stability. Plays a role in LPL maturation and secretion. Required for normal differentiation of the pancreas epithelium, and for normal exocrine function and survival of pancreatic cells. May play a role in Notch signaling. This Mesocricetus auratus (Golden hamster) protein is Protein sel-1 homolog 1 (Sel1l).